A 316-amino-acid polypeptide reads, in one-letter code: HPr kinase/phosphorylase (316 aa).

Catalysis depends on residues histidine 143 and lysine 164. 158–165 (GEAGSGKS) contacts ATP. Serine 165 lines the Mg(2+) pocket. The active-site Proton acceptor; for phosphorylation activity. Proton donor; for dephosphorylation activity is aspartate 182. An important for the catalytic mechanism of both phosphorylation and dephosphorylation region spans residues 206–215 (LEVRGLGVLN). Glutamate 207 is a Mg(2+) binding site. Arginine 251 is an active-site residue. An important for the catalytic mechanism of dephosphorylation region spans residues 272–277 (PVMPGR).

It belongs to the HPrK/P family. Homohexamer. It depends on Mg(2+) as a cofactor.

It carries out the reaction [HPr protein]-L-serine + ATP = [HPr protein]-O-phospho-L-serine + ADP + H(+). It catalyses the reaction [HPr protein]-O-phospho-L-serine + phosphate + H(+) = [HPr protein]-L-serine + diphosphate. In terms of biological role, catalyzes the ATP- as well as the pyrophosphate-dependent phosphorylation of a specific serine residue in HPr, a phosphocarrier protein of the phosphoenolpyruvate-dependent sugar phosphotransferase system (PTS). HprK/P also catalyzes the pyrophosphate-producing, inorganic phosphate-dependent dephosphorylation (phosphorolysis) of seryl-phosphorylated HPr (P-Ser-HPr). This Xanthomonas campestris pv. campestris (strain 8004) protein is HPr kinase/phosphorylase.